Here is a 288-residue protein sequence, read N- to C-terminus: tRNA dimethylallyltransferase (288 aa).

Residue 17 to 24 coordinates ATP; the sequence is GPTASGKS. A substrate-binding site is contributed by 19 to 24; it reads TASGKS.

It belongs to the IPP transferase family. As to quaternary structure, monomer. Mg(2+) is required as a cofactor.

It carries out the reaction adenosine(37) in tRNA + dimethylallyl diphosphate = N(6)-dimethylallyladenosine(37) in tRNA + diphosphate. Functionally, catalyzes the transfer of a dimethylallyl group onto the adenine at position 37 in tRNAs that read codons beginning with uridine, leading to the formation of N6-(dimethylallyl)adenosine (i(6)A). This Ruegeria sp. (strain TM1040) (Silicibacter sp.) protein is tRNA dimethylallyltransferase.